The following is a 245-amino-acid chain: tRNA pseudouridine synthase A (245 aa).

The active-site Nucleophile is the aspartate 52. Residue tyrosine 111 participates in substrate binding.

The protein belongs to the tRNA pseudouridine synthase TruA family. Homodimer.

The catalysed reaction is uridine(38/39/40) in tRNA = pseudouridine(38/39/40) in tRNA. Formation of pseudouridine at positions 38, 39 and 40 in the anticodon stem and loop of transfer RNAs. This Ehrlichia canis (strain Jake) protein is tRNA pseudouridine synthase A.